The sequence spans 198 residues: Ribonuclease HII (198 aa).

Residues 10-198 form the RNase H type-2 domain; sequence HLVAGVDEVG…PVRRALGIAS (189 aa). Asp16, Glu17, and Asp108 together coordinate a divalent metal cation.

Belongs to the RNase HII family. Mn(2+) is required as a cofactor. Requires Mg(2+) as cofactor.

The protein resides in the cytoplasm. It catalyses the reaction Endonucleolytic cleavage to 5'-phosphomonoester.. In terms of biological role, endonuclease that specifically degrades the RNA of RNA-DNA hybrids. The chain is Ribonuclease HII from Cronobacter sakazakii (strain ATCC BAA-894) (Enterobacter sakazakii).